The chain runs to 155 residues: Urease accessory protein UreE (155 aa).

This sequence belongs to the UreE family.

The protein localises to the cytoplasm. Involved in urease metallocenter assembly. Binds nickel. Probably functions as a nickel donor during metallocenter assembly. This is Urease accessory protein UreE from Synechococcus sp. (strain CC9311).